The following is a 1404-amino-acid chain: Proteoglycan 4 (1404 aa).

The signal sequence occupies residues 1 to 24 (MAWKTLPIYLLLLLSVFVIQQVSS). SMB domains are found at residues 26–69 (DLSS…AELS) and 66–108 (AELS…AEVH). Disulfide bonds link C30–C34, C30–C46, C34–C64, C44–C46, C44–C57, C50–C56, C57–C64, C70–C74, C70–C86, C74–C104, C84–C86, C84–C97, C90–C96, and C97–C104. A disordered region spans residues 111–966 (TSPPSSKKAP…TTQVTSTTTQ (856 aa)). S123 and S136 each carry an O-linked (GalNAc...) serine glycan. The span at 132–146 (TTKRSPKPPNKKKTK) shows a compositional bias: basic residues. The segment covering 166 to 177 (SSSSSSSSSSSS) has biased composition (low complexity). The span at 193 to 205 (ELQKKLKVKDNKK) shows a compositional bias: basic and acidic residues. A glycan (N-linked (GlcNAc...) asparagine) is linked at N206. Residues 235–252 (TPDTSTTQHNKVSTSPKI) show a composition bias toward polar residues. O-linked (GalNAc...) threonine glycans are attached at residues T240 and T253. Residues 266 to 276 (PNSDTSKETSL) show a composition bias toward polar residues. T277, T291, and T305 each carry an O-linked (GalNAc...) threonine glycan. S306 carries an O-linked (GalNAc...) serine glycan. Residue T310 is glycosylated (O-linked (GalNAc...) threonine). An O-linked (GalNAc...) serine glycan is attached at S317. O-linked (GalNAc...) threonine glycosylation is found at T324, T332, and T338. Composition is skewed to low complexity over residues 329 to 348 (AKPTPKAETTTKGPALTTPK) and 356 to 405 (KEPA…KEPA). Copy 1 of the repeat occupies 348–355 (KEPTPTTP). The segment at 348-855 (KEPTPTTPKE…TPETPPPTTS (508 aa)) is 59 X 8 AA repeats of K-X-P-X-P-T-T-X. One copy of the 2; approximate repeat lies at 356 to 363 (KEPASTTP). Repeat unit 3 spans residues 364-371 (KEPTPTTI). T367 carries O-linked (GalNAc...) threonine glycosylation. A 4; approximate repeat occupies 372-378 (KSAPTTP). A glycan (O-linked (GalNAc...) serine) is linked at S373. Residues T376, T384, and T385 are each glycosylated (O-linked (GalNAc...) threonine). The stretch at 379 to 386 (KEPAPTTT) is repeat 5. The stretch at 387–393 (KSAPTTP) is one 6; approximate repeat. The O-linked (GalNAc...) serine glycan is linked to S388. T391, T399, T400, T407, T408, T415, and T423 each carry an O-linked (GalNAc...) threonine glycan. Repeat copies occupy residues 394-401 (KEPAPTTT), 402-409 (KEPAPTTP), 410-417 (KEPAPTTT), and 418-425 (KEPAPTTT). The segment covering 413-431 (APTTTKEPAPTTTKSAPTT) has biased composition (low complexity). An 11; approximate repeat occupies 426-432 (KSAPTTP). S427 is a glycosylation site (O-linked (GalNAc...) serine). Residues T430, T438, T439, T446, T447, T454, and T455 are each glycosylated (O-linked (GalNAc...) threonine). Composition is skewed to pro residues over residues 432 to 467 (PKEPAPTTPKKPAPTTPKEPAPTTPKEPTPTTPKEP) and 476 to 506 (PTTPKEPAPTAPKKPAPTTPKEPAPTTPKEP). 4 consecutive repeat copies span residues 433–440 (KEPAPTTP), 441–448 (KKPAPTTP), 449–456 (KEPAPTTP), and 457–464 (KEPTPTTP). A 16; approximate repeat occupies 465–471 (KEPAPTT). The stretch at 472–479 (KEPAPTTP) is repeat 17. O-linked (GalNAc...) threonine glycans are attached at residues T477, T478, T485, T493, T494, T501, T502, and T509. One copy of the 18; approximate repeat lies at 480–487 (KEPAPTAP). One copy of the 19; approximate repeat lies at 488–495 (KKPAPTTP). A run of 4 repeats spans residues 496–503 (KEPAPTTP), 504–511 (KEPAPTTT), 512–519 (KEPSPTTP), and 520–527 (KEPAPTTT). Residues 523 to 561 (APTTTKSAPTTTKEPAPTTTKSAPTTPKEPSPTTTKEPA) show a composition bias toward low complexity. Residue T525 is glycosylated (O-linked (GalNAc...) threonine). One copy of the 24; approximate repeat lies at 528–534 (KSAPTTT). S529 is a glycosylation site (O-linked (GalNAc...) serine). O-linked (GalNAc...) threonine glycosylation is found at T532, T540, and T541. Residues 535-542 (KEPAPTTT) form repeat 25. The 26; approximate repeat unit spans residues 543–549 (KSAPTTP). A run of 6 repeats spans residues 550–557 (KEPSPTTT), 558–565 (KEPAPTTP), 566–573 (KEPAPTTP), 574–581 (KKPAPTTP), 582–589 (KEPAPTTP), and 590–597 (KEPAPTTT). S553 is a glycosylation site (O-linked (GalNAc...) serine). T555, T563, T564, T571, T572, T579, T580, T587, T588, T595, T603, T604, T611, T612, T616, T619, and T627 each carry an O-linked (GalNAc...) threonine glycan. Pro residues predominate over residues 562 to 592 (PTTPKEPAPTTPKKPAPTTPKEPAPTTPKEP). A 33; approximate repeat occupies 598–605 (KKPAPTTP). Over residues 602-611 (PTTPKEPAPT) the composition is skewed to pro residues. Repeat unit 34 spans residues 606-613 (KEPAPTTP). Low complexity predominate over residues 612 to 636 (TPKETAPTTPKKLTPTTPEKLAPTT). A 35; approximate repeat occupies 614–621 (KETAPTTP). A 36; approximate repeat occupies 622–629 (KKLTPTTP). Residues 638–645 (EKPAPTTP) form a 37; approximate repeat. Positions 653–667 (PEEPTPTTPEEPAPT) are enriched in pro residues. The stretch at 662-669 (EEPAPTTP) is one 38; approximate repeat. Residues T676, T683, T684, T691, T692, T699, T700, T704, and T707 are each glycosylated (O-linked (GalNAc...) threonine). Residues 677–699 (PKEPAPTTPKEPAPTTPKEPAPT) are compositionally biased toward pro residues. 3 consecutive repeat copies span residues 678-685 (KEPAPTTP), 686-693 (KEPAPTTP), and 694-701 (KEPAPTTP). The span at 700 to 721 (TPKETAPTTPKGTAPTTLKEPA) shows a compositional bias: low complexity. The 42; approximate repeat unit spans residues 702–709 (KETAPTTP). Residues 710–717 (KGTAPTTL) form a 43; approximate repeat. The stretch at 718–725 (KEPAPTTP) is repeat 44. O-linked (GalNAc...) threonine glycosylation is found at T723, T724, and T736. Over residues 728–761 (PAPKELAPTTTKEPTSTTSDKPAPTTPKGTAPTT) the composition is skewed to low complexity. Residues 731 to 738 (KELAPTTT) form a 45; approximate repeat. A 46; approximate repeat occupies 739-746 (KEPTSTTS). One copy of the 47; approximate repeat lies at 747 to 754 (DKPAPTTP). One copy of the 48; approximate repeat lies at 755 to 762 (KGTAPTTP). Residues 762–776 (PKEPAPTTPKEPAPT) are compositionally biased toward pro residues. 2 repeat units span residues 763-770 (KEPAPTTP) and 771-778 (KEPAPTTP). T768, T769, T776, and T777 each carry an O-linked (GalNAc...) threonine glycan. Residues 777–790 (TPKGTAPTTLKEPA) show a composition bias toward low complexity. The 51; approximate repeat unit spans residues 779 to 786 (KGTAPTTL). Copy 52 of the repeat occupies 787–794 (KEPAPTTP). O-linked (GalNAc...) threonine glycans are attached at residues T792, T793, and T805. Over residues 797 to 830 (PAPKELAPTTTKGPTSTTSDKPAPTTPKETAPTT) the composition is skewed to low complexity. The 53; approximate repeat unit spans residues 800–807 (KELAPTTT). Residues 808–815 (KGPTSTTS) form a 54; approximate repeat. An O-linked (GalNAc...) serine glycan is attached at S812. One copy of the 55; approximate repeat lies at 816 to 823 (DKPAPTTP). A 56; approximate repeat occupies 824–831 (KETAPTTP). Residues T829, T837, and T838 are each glycosylated (O-linked (GalNAc...) threonine). Residues 831–853 (PKEPAPTTPKKPAPTTPETPPPT) show a composition bias toward pro residues. 2 tandem repeats follow at residues 832–839 (KEPAPTTP) and 840–847 (KKPAPTTP). A 59; approximate repeat occupies 848–855 (ETPPPTTS). Positions 854-866 (TSEVSTPTTTKEP) are enriched in low complexity. S892 carries an O-linked (GalNAc...) serine glycan. Positions 899–914 (PTTKTPAATKPEMTTT) are enriched in low complexity. O-linked (GalNAc...) threonine glycosylation is present at T900. A compositionally biased stretch (basic and acidic residues) spans 915-926 (AKDKTTERDLRT). The span at 927–966 (TPETTTAAPKMTKETATTTEKTTESKITATTTQVTSTTTQ) shows a compositional bias: low complexity. 2 O-linked (GalNAc...) threonine glycosylation sites follow: T930 and T931. Residue S962 is glycosylated (O-linked (GalNAc...) serine). 6 O-linked (GalNAc...) threonine glycosylation sites follow: T963, T968, T975, T978, T979, and T980. Residues 992 to 1104 (ITTTEIMNKP…EDAGGAEGET (113 aa)) are disordered. The span at 999–1012 (NKPEETAKPKDRAT) shows a compositional bias: basic and acidic residues. Positions 1026–1047 (KAPKKPTSTKKPKTMPRVRKPK) are enriched in basic residues. T1039 carries O-linked (GalNAc...) threonine glycosylation. Residues 1048 to 1060 (TTPTPRKMTSTMP) show a composition bias toward low complexity. Residues 1073–1085 (LQTTTRPNQTPNS) are compositionally biased toward polar residues. Cysteines 1146 and 1403 form a disulfide. Hemopexin repeat units lie at residues 1148–1191 (GKPV…VWGI) and 1192–1239 (PSPI…FGGL). N-linked (GlcNAc...) asparagine glycosylation occurs at N1159. T1161 carries O-linked (GalNAc...) threonine glycosylation.

Homodimer; disulfide-linked. In terms of processing, N-glycosylated. O-glycosylated; contains glycosaminoglycan chondroitin sulfate and keratan sulfate. O-glycosylated with sialylated oligosaccharides which are predominantly represented by the monosialylated core type I structure, NeuNAcalpha2-3Galbeta1-3GalNAc, with smaller amounts of disialylated O-glycans. Post-translationally, the disulfide bond between Cys-1146 and Cys-1403 is essential for protein cleavage. In terms of processing, proteolytically cleaved by cathepsin CTSG. Highly expressed in synovial tissue, cartilage and liver and weakly in heart and lung. Isoform B is expressed in kidney, lung, liver, heart and brain. Isoform C and isoform D are widely expressed.

It localises to the secreted. In terms of biological role, plays a role in boundary lubrication within articulating joints. Prevents protein deposition onto cartilage from synovial fluid by controlling adhesion-dependent synovial growth and inhibiting the adhesion of synovial cells to the cartilage surface. Functionally, isoform F plays a role as a growth factor acting on the primitive cells of both hematopoietic and endothelial cell lineages. The chain is Proteoglycan 4 (PRG4) from Homo sapiens (Human).